The chain runs to 282 residues: NADPH-dependent 7-cyano-7-deazaguanine reductase (282 aa).

88–90 (IES) is a binding site for substrate. Position 90–91 (90–91 (SK)) interacts with NADPH. Cys190 acts as the Thioimide intermediate in catalysis. The active-site Proton donor is Asp197. 229-230 (HE) lines the substrate pocket. 258 to 259 (RG) is a binding site for NADPH.

The protein belongs to the GTP cyclohydrolase I family. QueF type 2 subfamily. Homodimer.

It localises to the cytoplasm. The catalysed reaction is 7-aminomethyl-7-carbaguanine + 2 NADP(+) = 7-cyano-7-deazaguanine + 2 NADPH + 3 H(+). It functions in the pathway tRNA modification; tRNA-queuosine biosynthesis. Catalyzes the NADPH-dependent reduction of 7-cyano-7-deazaguanine (preQ0) to 7-aminomethyl-7-deazaguanine (preQ1). This Citrobacter koseri (strain ATCC BAA-895 / CDC 4225-83 / SGSC4696) protein is NADPH-dependent 7-cyano-7-deazaguanine reductase.